A 228-amino-acid polypeptide reads, in one-letter code: Vesicle transport protein SEC20 (228 aa).

At 1 to 199 (MAAPQDVHVR…LITKYNRREL (199 aa)) the chain is on the cytoplasmic side. The stretch at 37–90 (LSELTELNTKVKEKFQQLKQRIQELEQSAREQDKESEKQLLLQEVENHKKQMLS) forms a coiled coil. A helical; Anchor for type IV membrane protein membrane pass occupies residues 200–220 (TDKLLIFLALALFLATVLYIV). Residues 221 to 228 (KKRLFPFL) are Lumenal-facing.

This sequence belongs to the SEC20 family. Component of a SNARE complex consisting of STX18, USE1L, BNIP1/SEC20L and SEC22B. Interacts directly with STX18, RINT1/TIP20L and NAPA. Interacts with ZW10 through RINT1. Interacts with BCL2. Interacts with RNF186. Interacts with RNF185. Interacts with SQSTM1; increased by 'Lys-63'-linked polyubiquitination of BNIP1. In terms of processing, polyubiquitinated. 'Lys-63'-linked polyubiquitination by RNF185 increases the interaction with the autophagy receptor SQSTM1. Undergoes 'Lys-29'- and 'Lys-63'-linked polyubiquitination by RNF186 that may regulate BNIP1 localization to the mitochondrion.

It is found in the endoplasmic reticulum membrane. It localises to the mitochondrion membrane. Functionally, as part of a SNARE complex may be involved in endoplasmic reticulum membranes fusion and be required for the maintenance of endoplasmic reticulum organization. Also plays a role in apoptosis. It is for instance required for endoplasmic reticulum stress-induced apoptosis. As a substrate of RNF185 interacting with SQSTM1, might also be involved in mitochondrial autophagy. The polypeptide is Vesicle transport protein SEC20 (Mus musculus (Mouse)).